The following is a 469-amino-acid chain: Bifunctional protein GlmU (469 aa).

The pyrophosphorylase stretch occupies residues 1–236; that stretch reads MLNIKLNIVI…ISEINGINDC (236 aa). UDP-N-acetyl-alpha-D-glucosamine-binding positions include 11-14, lysine 25, glutamine 83, 88-89, 110-112, glycine 147, glutamate 161, asparagine 176, and asparagine 234; these read LAAG, GT, and YGD. Position 112 (aspartate 112) interacts with Mg(2+). Asparagine 234 serves as a coordination point for Mg(2+). Residues 237 to 257 are linker; it reads AQLANLERLYQKEQAESLLRI. The interval 258-469 is N-acetyltransferase; the sequence is GVIIADPNRF…KKKIRYNIIY (212 aa). UDP-N-acetyl-alpha-D-glucosamine-binding residues include arginine 340 and lysine 358. The active-site Proton acceptor is histidine 370. UDP-N-acetyl-alpha-D-glucosamine-binding residues include tyrosine 373 and asparagine 384. Acetyl-CoA is bound by residues alanine 387, 393–394, serine 412, alanine 430, and arginine 447; that span reads NY.

This sequence in the N-terminal section; belongs to the N-acetylglucosamine-1-phosphate uridyltransferase family. In the C-terminal section; belongs to the transferase hexapeptide repeat family. In terms of assembly, homotrimer. It depends on Mg(2+) as a cofactor.

It localises to the cytoplasm. It catalyses the reaction alpha-D-glucosamine 1-phosphate + acetyl-CoA = N-acetyl-alpha-D-glucosamine 1-phosphate + CoA + H(+). The enzyme catalyses N-acetyl-alpha-D-glucosamine 1-phosphate + UTP + H(+) = UDP-N-acetyl-alpha-D-glucosamine + diphosphate. It participates in nucleotide-sugar biosynthesis; UDP-N-acetyl-alpha-D-glucosamine biosynthesis; N-acetyl-alpha-D-glucosamine 1-phosphate from alpha-D-glucosamine 6-phosphate (route II): step 2/2. It functions in the pathway nucleotide-sugar biosynthesis; UDP-N-acetyl-alpha-D-glucosamine biosynthesis; UDP-N-acetyl-alpha-D-glucosamine from N-acetyl-alpha-D-glucosamine 1-phosphate: step 1/1. Its pathway is bacterial outer membrane biogenesis; LPS lipid A biosynthesis. In terms of biological role, catalyzes the last two sequential reactions in the de novo biosynthetic pathway for UDP-N-acetylglucosamine (UDP-GlcNAc). The C-terminal domain catalyzes the transfer of acetyl group from acetyl coenzyme A to glucosamine-1-phosphate (GlcN-1-P) to produce N-acetylglucosamine-1-phosphate (GlcNAc-1-P), which is converted into UDP-GlcNAc by the transfer of uridine 5-monophosphate (from uridine 5-triphosphate), a reaction catalyzed by the N-terminal domain. The polypeptide is Bifunctional protein GlmU (Baumannia cicadellinicola subsp. Homalodisca coagulata).